Reading from the N-terminus, the 309-residue chain is Palmitoyltransferase ZDHHC19 (309 aa).

Helical transmembrane passes span Leu29 to Pro49 and Trp59 to Leu79. Residues Gln112–Leu162 form the DHHC domain. The active-site S-palmitoyl cysteine intermediate is the Cys142. The next 2 membrane-spanning stretches (helical) occupy residues Leu160–Val180 and Ile193–Leu213. The segment covering Leu280–Pro294 has biased composition (pro residues). Residues Leu280–Trp309 are disordered.

Belongs to the DHHC palmitoyltransferase family.

It is found in the golgi apparatus membrane. The protein localises to the cytoplasm. Its subcellular location is the perinuclear region. The enzyme catalyses L-cysteinyl-[protein] + hexadecanoyl-CoA = S-hexadecanoyl-L-cysteinyl-[protein] + CoA. Its function is as follows. Palmitoyltransferase that mediates palmitoylation oproteins, such as RRAS and SQSTM1. Catalyzes palmitoylation of RRAS, leading to increased cell viability. Acts as a positive regulator of autophagy by mediating palmitoylation of SQSTM1, promoting affinity between SQSTM1 and ATG8 proteins and recruitment of ubiquitinated cargo proteins to autophagosomes. Functionally, (Microbial infection) Promotes Chikungunya virus (CHIKV) replication by mediating viral nsp1 palmitoylation. The protein is Palmitoyltransferase ZDHHC19 of Homo sapiens (Human).